The sequence spans 577 residues: MNIQALLSEKVRQAMIAAGAPADCEPQVRQSAKVQFGDYQANGMMAVAKKLGMAPRQLAEQVLTHLDLNGIASKVEIAGPGFINIFLDPAFLADHVQQALASDRLGVATPEKQTIVVDYSAPNVAKEMHVGHLRSTIIGDAAVRTLEFLGHKVIRANHVGDWGTQFGMLIAWLEKQQQENAGEMELADLEGFYRDAKKHYDEDEEFAERARNYVVKLQSGDEYFREMWRKLVDITMTQNQITYDRLNVTLTRDDVMGESLYNPMLPGIVADLKAKGLAVESEGATVVFLDEFKNKEGEPMGVIIQKKDGGYLYTTTDIACAKYRYETLHADRVLYYIDSRQHQHLMQAWAIVRKAGYVPESVPLEHHMFGMMLGKDGKPFKTRAGGTVKLADLLDEALERARRLVAEKNPDMPADELEKLANAVGIGAVKYADLSKNRTTDYIFDWDNMLAFEGNTAPYMQYAYTRVLSVFRKAEIDEEQLAAAPVIIREDREAQLAARLLQFEETLTVVAREGTPHVMCAYLYDLAGLFSGFYEHCPILSAENEEVRNSRLKLAQLTAKTLKLGLDTLGIETVERM.

Residues 122–132 carry the 'HIGH' region motif; that stretch reads PNVAKEMHVGH.

The protein belongs to the class-I aminoacyl-tRNA synthetase family. Monomer.

Its subcellular location is the cytoplasm. It carries out the reaction tRNA(Arg) + L-arginine + ATP = L-arginyl-tRNA(Arg) + AMP + diphosphate. This is Arginine--tRNA ligase from Escherichia coli O7:K1 (strain IAI39 / ExPEC).